The following is a 385-amino-acid chain: O-phospho-L-seryl-tRNA:Cys-tRNA synthase (385 aa).

Residues 89–90, asparagine 195, and 218–220 contribute to the pyridoxal 5'-phosphate site; these read AR and SGH. Lysine 221 is modified (N6-(pyridoxal phosphate)lysine).

Belongs to the SepCysS family. As to quaternary structure, homodimer. Interacts with SepRS. Requires pyridoxal 5'-phosphate as cofactor.

The catalysed reaction is O-phospho-L-seryl-tRNA(Cys) + hydrogen sulfide + H(+) = L-cysteinyl-tRNA(Cys) + phosphate. In terms of biological role, converts O-phospho-L-seryl-tRNA(Cys) (Sep-tRNA(Cys)) to L-cysteinyl-tRNA(Cys) (Cys-tRNA(Cys)). This Methanococcus aeolicus (strain ATCC BAA-1280 / DSM 17508 / OCM 812 / Nankai-3) protein is O-phospho-L-seryl-tRNA:Cys-tRNA synthase.